We begin with the raw amino-acid sequence, 53 residues long: Large ribosomal subunit protein bL33 (53 aa).

It belongs to the bacterial ribosomal protein bL33 family.

The chain is Large ribosomal subunit protein bL33 from Ureaplasma parvum serovar 3 (strain ATCC 27815 / 27 / NCTC 11736).